The chain runs to 293 residues: Probable endoribonuclease YicC (293 aa).

Belongs to the YicC/YloC family. It depends on a divalent metal cation as a cofactor.

In terms of biological role, negatively modulates sporulation, probably in response to nutrient conditions. Effects expression of sporulation regulator spo0A in an indirect manner, possibly via repression of the sinRR' operon. Functionally, probably a ssRNA endonuclease. Might contribute to small RNA (sRNA) regulation. This chain is Probable endoribonuclease YicC, found in Clostridioides difficile (strain 630) (Peptoclostridium difficile).